A 115-amino-acid polypeptide reads, in one-letter code: MAGFGLPNFGQLTEAFKKAQQIQQNAQKLQEELEVMEIEGTNDDNRAKIWMSGNQKPLRVEIDPSLLSEGKAIIEEAILEAMKSAHEVSTSTMKERMEDLTGGFKLNLPGMGEES.

Residues 89 to 115 (STSTMKERMEDLTGGFKLNLPGMGEES) form a disordered region.

This sequence belongs to the YbaB/EbfC family. In terms of assembly, homodimer.

The protein resides in the cytoplasm. Its subcellular location is the nucleoid. Functionally, binds to DNA and alters its conformation. May be involved in regulation of gene expression, nucleoid organization and DNA protection. The polypeptide is Nucleoid-associated protein NATL1_00191 (Prochlorococcus marinus (strain NATL1A)).